The sequence spans 301 residues: Probable alpha-L-glutamate ligase (301 aa).

One can recognise an ATP-grasp domain in the interval Leu104 to Glu287. Residues Lys141, Glu178 to Phe179, Asp187, and Arg211 to Asn213 each bind ATP. Residues Asp248, Glu260, and Asn262 each contribute to the Mg(2+) site. Mn(2+) is bound by residues Asp248, Glu260, and Asn262.

This sequence belongs to the RimK family. Requires Mg(2+) as cofactor. The cofactor is Mn(2+).

In Marinobacter nauticus (strain ATCC 700491 / DSM 11845 / VT8) (Marinobacter aquaeolei), this protein is Probable alpha-L-glutamate ligase.